We begin with the raw amino-acid sequence, 248 residues long: Small ribosomal subunit protein eS1 (248 aa).

Residues 1 to 21 are disordered; sequence MAVGKDKRISKGKKGGKKKIV.

Belongs to the eukaryotic ribosomal protein eS1 family. In terms of assembly, component of the small ribosomal subunit. Mature ribosomes consist of a small (40S) and a large (60S) subunit. The 40S subunit contains about 33 different proteins and 1 molecule of RNA (18S). The 60S subunit contains about 49 different proteins and 3 molecules of RNA (25S, 5.8S and 5S).

Its subcellular location is the cytoplasm. This Syntrichia ruralis (Great hairy screw-moss) protein is Small ribosomal subunit protein eS1.